A 413-amino-acid polypeptide reads, in one-letter code: Histidine--tRNA ligase (413 aa).

It belongs to the class-II aminoacyl-tRNA synthetase family. As to quaternary structure, homodimer.

It localises to the cytoplasm. The enzyme catalyses tRNA(His) + L-histidine + ATP = L-histidyl-tRNA(His) + AMP + diphosphate + H(+). The sequence is that of Histidine--tRNA ligase from Wolbachia sp. subsp. Brugia malayi (strain TRS).